Reading from the N-terminus, the 310-residue chain is Mitochondrial citrate transporter F (310 aa).

3 Solcar repeats span residues 23–108, 115–207, and 216–303; these read KKVH…LKNH, PPGL…FKRL, and DNMG…HKKL. The next 6 helical transmembrane spans lie at 29 to 49, 85 to 105, 122 to 142, 186 to 206, 222 to 242, and 275 to 296; these read FWFGGSASCFAAAVTHPLDLV, SAAILRQLTYSTTRFGIYEEL, IGMASASGFIGGMAGNPADVL, NSTRAVLMTTSQLASYDTFKR, FTASFMAGFVATTVCSPVDVI, and AFRGWVPSFIRLGPHTIATFIF.

This sequence belongs to the mitochondrial carrier (TC 2.A.29) family.

It is found in the mitochondrion inner membrane. Mitochondrial transporter that does not mediate citrate export from mitochondria to cytoplasm. Its exact function has still to be determined. The polypeptide is Mitochondrial citrate transporter F (Aspergillus niger (strain ATCC 1015 / CBS 113.46 / FGSC A1144 / LSHB Ac4 / NCTC 3858a / NRRL 328 / USDA 3528.7)).